Here is a 606-residue protein sequence, read N- to C-terminus: Dihydroxy-acid dehydratase ilvC, mitochondrial (606 aa).

A [2Fe-2S] cluster-binding site is contributed by Cys-84. Residue Asp-116 coordinates Mg(2+). Cys-157 is a binding site for [2Fe-2S] cluster. Asp-158 contacts Mg(2+). Residue Cys-232 participates in [2Fe-2S] cluster binding. A Mg(2+)-binding site is contributed by Glu-485. The active-site Proton acceptor is the Ser-511.

Belongs to the IlvD/Edd family. It depends on [2Fe-2S] cluster as a cofactor. Mg(2+) serves as cofactor.

The protein resides in the mitochondrion. The enzyme catalyses (2R)-2,3-dihydroxy-3-methylbutanoate = 3-methyl-2-oxobutanoate + H2O. It catalyses the reaction (2R,3R)-2,3-dihydroxy-3-methylpentanoate = (S)-3-methyl-2-oxopentanoate + H2O. Its pathway is amino-acid biosynthesis; L-isoleucine biosynthesis; L-isoleucine from 2-oxobutanoate: step 3/4. It participates in amino-acid biosynthesis; L-valine biosynthesis; L-valine from pyruvate: step 3/4. With respect to regulation, DHAD activity is inhibited in dose-dependent manner by 2-hydroxy-3-methylbutyric acid with an IC(50) of about 8 mM. In terms of biological role, dihydroxyacid dehydratase that catalyzes the third step in the common pathway leading to biosynthesis of branched-chain amino acids. Catalyzes the dehydration of (2R,3R)-2,3-dihydroxy-3-methylpentanoate (2,3-dihydroxy-3-methylvalerate) into 2-oxo-3-methylpentanoate (2-oxo-3-methylvalerate) and of (2R)-2,3-dihydroxy-3-methylbutanoate (2,3-dihydroxyisovalerate) into 2-oxo-3-methylbutanoate (2-oxoisovalerate), the penultimate precursor to L-isoleucine and L-valine, respectively. IlvC and the branched-chain amino acid biosynthesis are crucial for virulence and may be a potential target to develop antifungal agents. The sequence is that of Dihydroxy-acid dehydratase ilvC, mitochondrial from Aspergillus fumigatus (strain ATCC MYA-4609 / CBS 101355 / FGSC A1100 / Af293) (Neosartorya fumigata).